The sequence spans 122 residues: Small ribosomal subunit protein uS13 (122 aa).

Residues 93–122 (RRSLPVRGQRTHTNARTRKGPAKPIAGKKK) form a disordered region.

The protein belongs to the universal ribosomal protein uS13 family. In terms of assembly, part of the 30S ribosomal subunit. Forms a loose heterodimer with protein S19. Forms two bridges to the 50S subunit in the 70S ribosome.

Located at the top of the head of the 30S subunit, it contacts several helices of the 16S rRNA. In the 70S ribosome it contacts the 23S rRNA (bridge B1a) and protein L5 of the 50S subunit (bridge B1b), connecting the 2 subunits; these bridges are implicated in subunit movement. Contacts the tRNAs in the A and P-sites. The polypeptide is Small ribosomal subunit protein uS13 (Chelativorans sp. (strain BNC1)).